A 569-amino-acid polypeptide reads, in one-letter code: Cytochrome P450 monooxygenase abl1 (569 aa).

A heme-binding site is contributed by C464.

It belongs to the cytochrome P450 family. It depends on heme as a cofactor.

Its pathway is hormone biosynthesis. Functionally, cytochrome P450 monooxygenase; part of the gene cluster that mediates the biosynthesis of abscisic acid (ABA), a phytohormone that acts antagonistically toward salicylic acid (SA), jasmonic acid (JA) and ethylene (ETH) signaling, to impede plant defense responses. The first step of the pathway catalyzes the reaction from farnesyl diphosphate to alpha-ionylideneethane performed by the alpha-ionylideneethane synthase abl3 via a three-step reaction mechanism involving 2 neutral intermediates, beta-farnesene and allofarnesene. The cytochrome P450 monooxygenase abl1 might then be involved in the conversion of alpha-ionylideneethane to alpha-ionylideneacetic acid. Alpha-ionylideneacetic acid is further converted to abscisic acid in 2 steps involving the cytochrome P450 monooxygenase abl2 and the short-chain dehydrogenase/reductase abl4, via the intermediates 1'-deoxy-ABA or 1',4'-trans-diol-ABA, depending on the order of action of these 2 enzymes. Abl2 is responsible for the hydroxylation of carbon atom C-1' and abl4 might be involved in the oxidation of the C-4' carbon atom. The protein is Cytochrome P450 monooxygenase abl1 of Leptosphaeria maculans (strain JN3 / isolate v23.1.3 / race Av1-4-5-6-7-8) (Blackleg fungus).